Consider the following 933-residue polypeptide: MNMKKKEKHAIRKKSIGVASVLVGTLIGFGLLSSKEADASENSVTQSDSASNESKSNDSSSVSAAPKTDDTNVSDTKTSSNTNNGETSVAQNPAQQETTQSSSTNATTEETPVTGEATTTTTNQANTPATTQSSNTNAEELVNQTSNETTFNDTNTVSSVNSPQNSTNAENVSTTQDTSTEATPSNNESAPQSTDASNKDVVNQAVNTSAPRMRAFSLAAVAADAPAAGTDITNQLTNVTVGIDSGTTVYPHQAGYVKLNYGFSVPNSAVKGDTFKITVPKELNLNGVTSTAKVPPIMAGDQVLANGVIDSDGNVIYTFTDYVNTKDDVKATLTMPAYIDPENVKKTGNVTLATGIGSTTANKTVLVDYEKYGKFYNLSIKGTIDQIDKTNNTYRQTIYVNPSGDNVIAPVLTGNLKPNTDSNALIDQQNTSIKVYKVDNAADLSESYFVNPENFEDVTNSVNITFPNPNQYKVEFNTPDDQITTPYIVVVNGHIDPNSKGDLALRSTLYGYNSNIIWRSMSWDNEVAFNNGSGSGDGIDKPVVPEQPDEPGEIEPIPEDSDSDPGSDSGSDSNSDSGSDSGSDSTSDSGSDSASDSDSASDSDSASDSDSASDSDSASDSDSDNDSDSDSDSDSDSDSDSDSDSDSDSDSDSDSDSDSDSDSDSDSDSDSDSDSDSDSDSDSDSDSDSDSDSDSDSDSDSDSDSDSDSDSDSDSDSDSDSDSDSDSDSDSDSDSDSDSDSDSDSDSDSDSDSDSDSDSDSDSDSDSASDSDSDSDSDSDSDSDSDSDSDSDSDSDSDSDSDSDSDSESDSDSESDSDSDSDSDSDSDSDSDSDSDSASDSDSGSDSDSSSDSDSESDSNSDSESGSNNNVVPPNSPKNGTNASNKNEAKDSKEPLPDTGSEDEANTSLIWGLLASIGSLLLFRRKKENKDKK.

The first 39 residues, 1–39, serve as a signal peptide directing secretion; that stretch reads MNMKKKEKHAIRKKSIGVASVLVGTLIGFGLLSSKEADA. A YSIRK-G/S signaling motif motif is present at residues 9 to 20; sequence HAIRKKSIGVAS. 2 disordered regions span residues 34 to 200 and 529 to 904; these read SKEA…SNKD and FNNG…SEDE. The segment at 40–542 is ligand binding A region; that stretch reads SENSVTQSDS…SGSGDGIDKP (503 aa). The span at 47–65 shows a compositional bias: low complexity; sequence SDSASNESKSNDSSSVSAA. A compositionally biased stretch (polar residues) spans 71 to 105; it reads TNVSDTKTSSNTNNGETSVAQNPAQQETTQSSSTN. The segment covering 106–132 has biased composition (low complexity); that stretch reads ATTEETPVTGEATTTTTNQANTPATTQ. Positions 133 to 200 are enriched in polar residues; that stretch reads SSNTNAEELV…PQSTDASNKD (68 aa). Residues 547 to 565 show a composition bias toward acidic residues; it reads QPDEPGEIEPIPEDSDSDP. The span at 566–598 shows a compositional bias: low complexity; it reads GSDSGSDSNSDSGSDSGSDSTSDSGSDSASDSD. Positions 599 to 861 are enriched in acidic residues; the sequence is SASDSDSASD…DSDSESDSNS (263 aa). Positions 862 to 880 are enriched in low complexity; sequence DSESGSNNNVVPPNSPKNG. Over residues 887–896 the composition is skewed to basic and acidic residues; sequence NEAKDSKEPL. The LPXTG sorting signal signature appears at 896–900; that stretch reads LPDTG. Pentaglycyl murein peptidoglycan amidated threonine is present on Thr899. Positions 900-933 are cleaved as a propeptide — removed by sortase; it reads GSEDEANTSLIWGLLASIGSLLLFRRKKENKDKK.

The protein belongs to the serine-aspartate repeat-containing protein (SDr) family.

Its subcellular location is the secreted. The protein resides in the cell wall. In terms of biological role, cell surface-associated protein implicated in virulence. Promotes bacterial attachment exclusively to the gamma-chain of human fibrinogen. Induces formation of bacterial clumps, which diminish the ability of group IIA phospholipase A2 to cause bacterial phospholipid hydrolysis and killing. Significantly decreases macrophage phagocytosis possibly thanks to the clumps, clumped bacteria being too large to be phagocytosed. Dominant factor responsible for human platelet aggregation, which may be an important mechanism for initiating infective endocarditis. Enhances spleen cell proliferative response in vitro, contributing significantly to the immunostimulatory activity of S.aureus. This is Clumping factor A (clfA) from Staphylococcus aureus (strain Newman).